A 125-amino-acid chain; its full sequence is U-scoloptoxin(05)-Er1a (125 aa).

Residues 1 to 20 form the signal peptide; sequence MLSLGVSIFLLVFLIPENSG.

The protein belongs to the scoloptoxin-05 family. Contains 4 disulfide bonds. Expressed by the venom gland.

It localises to the secreted. In Ethmostigmus rubripes (Giant centipede), this protein is U-scoloptoxin(05)-Er1a.